A 723-amino-acid polypeptide reads, in one-letter code: Protein Aster-A (723 aa).

Low complexity predominate over residues 1–18 (MFDTTPHSGRSSPSSSPS). The disordered stretch occupies residues 1-63 (MFDTTPHSGR…SGVSGTLSTQ (63 aa)). Residues 28-38 (PSRPPSAPEPE) are compositionally biased toward pro residues. Positions 93-160 (EDFRKLFSKL…KEVTCLKKEK (68 aa)) constitute a GRAM domain. Positions 257–337 (SPSGAADRSQ…DGPTSNLGPL (81 aa)) are disordered. 3 positions are modified to phosphoserine: Ser265, Ser269, and Ser273. Over residues 302–314 (DSQLDASSSQTVT) the composition is skewed to polar residues. Residues 370–541 (SGRLLINSVF…ELAKAEKVSL (172 aa)) enclose the VASt domain. Ser418 carries the phosphoserine modification. The tract at residues 562 to 601 (LSWRGHRDGPQHPDPDPCTQTSMHTSGSLSSRFSEPSVDQ) is disordered. The segment covering 566-576 (GHRDGPQHPDP) has biased composition (basic and acidic residues). The span at 579–595 (CTQTSMHTSGSLSSRFS) shows a compositional bias: polar residues. Residues 610 to 630 (ALVLISIVLIVLIALNALLFY) form a helical membrane-spanning segment.

The protein resides in the endoplasmic reticulum membrane. It localises to the cell membrane. It is found in the cytoplasmic vesicle. Its subcellular location is the autophagosome. In terms of biological role, cholesterol transporter that mediates non-vesicular transport of cholesterol from the plasma membrane (PM) to the endoplasmic reticulum (ER). Contains unique domains for binding cholesterol and the PM, thereby serving as a molecular bridge for the transfer of cholesterol from the PM to the ER. Plays a crucial role in cholesterol homeostasis and has the unique ability to localize to the PM based on the level of membrane cholesterol. In lipid-poor conditions localizes to the ER membrane and in response to excess cholesterol in the PM is recruited to the endoplasmic reticulum-plasma membrane contact sites (EPCS) which is mediated by the GRAM domain. At the EPCS, the sterol-binding VASt/ASTER domain binds to the cholesterol in the PM and facilitates its transfer from the PM to ER. May play a role in tumor progression. Plays a role in autophagy regulation and is required for biogenesis of the autophagosome. This function in autophagy requires its cholesterol-transfer activity. The polypeptide is Protein Aster-A (Rattus norvegicus (Rat)).